A 513-amino-acid polypeptide reads, in one-letter code: Bifunctional purine biosynthesis protein PurH (513 aa).

Residues Met1–Val144 enclose the MGS-like domain.

The protein belongs to the PurH family.

The enzyme catalyses (6R)-10-formyltetrahydrofolate + 5-amino-1-(5-phospho-beta-D-ribosyl)imidazole-4-carboxamide = 5-formamido-1-(5-phospho-D-ribosyl)imidazole-4-carboxamide + (6S)-5,6,7,8-tetrahydrofolate. It carries out the reaction IMP + H2O = 5-formamido-1-(5-phospho-D-ribosyl)imidazole-4-carboxamide. It functions in the pathway purine metabolism; IMP biosynthesis via de novo pathway; 5-formamido-1-(5-phospho-D-ribosyl)imidazole-4-carboxamide from 5-amino-1-(5-phospho-D-ribosyl)imidazole-4-carboxamide (10-formyl THF route): step 1/1. Its pathway is purine metabolism; IMP biosynthesis via de novo pathway; IMP from 5-formamido-1-(5-phospho-D-ribosyl)imidazole-4-carboxamide: step 1/1. The polypeptide is Bifunctional purine biosynthesis protein PurH (Lactobacillus delbrueckii subsp. bulgaricus (strain ATCC BAA-365 / Lb-18)).